Here is an 86-residue protein sequence, read N- to C-terminus: Large ribosomal subunit protein uL23 (86 aa).

This sequence belongs to the universal ribosomal protein uL23 family. As to quaternary structure, part of the 50S ribosomal subunit. Contacts protein L29.

Functionally, binds to 23S rRNA. One of the proteins that surrounds the polypeptide exit tunnel on the outside of the ribosome. This Methanococcus maripaludis (strain DSM 14266 / JCM 13030 / NBRC 101832 / S2 / LL) protein is Large ribosomal subunit protein uL23.